Consider the following 551-residue polypeptide: MASQATTLRGYNIRKRDNVFEPKSSENLNSLNQSEEEGHIGRWPPLGYEAVSAEQKSAVQLRESQAGASISNNMNFKANDKSFSTSTAGRMSPDTNSLHHILPKNQVKNNGQTMDANCNNNVSNDANVPVCKNCLTSTTPLWRRDEHGAMLCNACGLFLKLHGKPRPISLKTDVIKSRNRKSNTNHAHNLDNFRNQTLIAELKGDCNIESSGRKANRVTSEDKKKKSSQLLMGTSSTAKISKKPKTESKERSDSHLSATKLEVLMSGDCSRPNLKPKLPKQDTAIYQEKLLTFPSYTDVKEYSNSAHQSAFIKERSQFNAASFPLNASHSVTSKTGADSPQLPHLSMLLGSLSSTSISNNGSEIVSNCNNGIASTAATLAPTSSRTTDSNPSEVPNQIRSTMSSPDIISAKRNDPAPLSFHMASINDMLETRDRAISNVKTETTPPHFIPFLQSSKAPCISKANSQSISNSVSSSDVSGRKFENHPAKDLGDQLSTKLHKEEEIIKLKTRINELELVTDLYRRHINELDGKCRALEERLQRTVKQEGNKGG.

The tract at residues 17–43 (DNVFEPKSSENLNSLNQSEEEGHIGRW) is disordered. A GATA-type zinc finger spans residues 131 to 155 (CKNCLTSTTPLWRRDEHGAMLCNAC). Disordered regions lie at residues 212–260 (GRKA…SATK), 379–400 (LAPT…QIRS), and 467–490 (SISN…AKDL). Residues 228–239 (SQLLMGTSSTAK) are compositionally biased toward polar residues. Basic and acidic residues predominate over residues 244-254 (PKTESKERSDS). The span at 388-400 (DSNPSEVPNQIRS) shows a compositional bias: polar residues. Low complexity predominate over residues 467 to 477 (SISNSVSSSDV). The span at 478–490 (SGRKFENHPAKDL) shows a compositional bias: basic and acidic residues.

It is found in the nucleus. The protein is Protein GZF3 (GZF3) of Saccharomyces cerevisiae (strain ATCC 204508 / S288c) (Baker's yeast).